Here is a 194-residue protein sequence, read N- to C-terminus: Fe/S biogenesis protein NfuA (194 aa).

[4Fe-4S] cluster-binding residues include cysteine 151 and cysteine 154.

The protein belongs to the NfuA family. Homodimer. It depends on [4Fe-4S] cluster as a cofactor.

Involved in iron-sulfur cluster biogenesis. Binds a 4Fe-4S cluster, can transfer this cluster to apoproteins, and thereby intervenes in the maturation of Fe/S proteins. Could also act as a scaffold/chaperone for damaged Fe/S proteins. The protein is Fe/S biogenesis protein NfuA of Aliivibrio salmonicida (strain LFI1238) (Vibrio salmonicida (strain LFI1238)).